Reading from the N-terminus, the 618-residue chain is UvrABC system protein C (618 aa).

Residues 15–93 (RTPGVYLMKD…IKEHHPRYNI (79 aa)) enclose the GIY-YIG domain. The UVR domain occupies 203-238 (NNLLRELRERMKMAAEQMNYEEAAFLRDRIRAIEET).

The protein belongs to the UvrC family. As to quaternary structure, interacts with UvrB in an incision complex.

Its subcellular location is the cytoplasm. Its function is as follows. The UvrABC repair system catalyzes the recognition and processing of DNA lesions. UvrC both incises the 5' and 3' sides of the lesion. The N-terminal half is responsible for the 3' incision and the C-terminal half is responsible for the 5' incision. In Syntrophus aciditrophicus (strain SB), this protein is UvrABC system protein C.